A 240-amino-acid polypeptide reads, in one-letter code: Dihydromonapterin reductase (240 aa).

Catalysis depends on Y152, which acts as the Proton acceptor.

It belongs to the short-chain dehydrogenases/reductases (SDR) family. FolM subfamily.

It catalyses the reaction (6S)-5,6,7,8-tetrahydrofolate + NADP(+) = 7,8-dihydrofolate + NADPH + H(+). It carries out the reaction 7,8-dihydromonapterin + NADPH + H(+) = 5,6,7,8-tetrahydromonapterin + NADP(+). In terms of biological role, catalyzes the reduction of dihydromonapterin to tetrahydromonapterin. Also has lower activity with dihydrofolate. The protein is Dihydromonapterin reductase (folM) of Shigella sonnei (strain Ss046).